Here is a 317-residue protein sequence, read N- to C-terminus: Beta-ketoacyl-[acyl-carrier-protein] synthase III (317 aa).

Catalysis depends on residues Cys112 and His244. Positions 245–249 (QANIR) are ACP-binding. The active site involves Asn274.

Belongs to the thiolase-like superfamily. FabH family. As to quaternary structure, homodimer.

Its subcellular location is the cytoplasm. The catalysed reaction is malonyl-[ACP] + acetyl-CoA + H(+) = 3-oxobutanoyl-[ACP] + CO2 + CoA. Its pathway is lipid metabolism; fatty acid biosynthesis. Catalyzes the condensation reaction of fatty acid synthesis by the addition to an acyl acceptor of two carbons from malonyl-ACP. Catalyzes the first condensation reaction which initiates fatty acid synthesis and may therefore play a role in governing the total rate of fatty acid production. Possesses both acetoacetyl-ACP synthase and acetyl transacylase activities. Its substrate specificity determines the biosynthesis of branched-chain and/or straight-chain of fatty acids. The sequence is that of Beta-ketoacyl-[acyl-carrier-protein] synthase III from Rickettsia prowazekii (strain Madrid E).